Consider the following 198-residue polypeptide: Peptidyl-tRNA hydrolase (198 aa).

Tyr18 serves as a coordination point for tRNA. The active-site Proton acceptor is His23. TRNA is bound by residues Phe69, Asn71, and Asn117.

Belongs to the PTH family. As to quaternary structure, monomer.

The protein localises to the cytoplasm. It carries out the reaction an N-acyl-L-alpha-aminoacyl-tRNA + H2O = an N-acyl-L-amino acid + a tRNA + H(+). Its function is as follows. Hydrolyzes ribosome-free peptidyl-tRNAs (with 1 or more amino acids incorporated), which drop off the ribosome during protein synthesis, or as a result of ribosome stalling. Functionally, catalyzes the release of premature peptidyl moieties from peptidyl-tRNA molecules trapped in stalled 50S ribosomal subunits, and thus maintains levels of free tRNAs and 50S ribosomes. The chain is Peptidyl-tRNA hydrolase from Idiomarina loihiensis (strain ATCC BAA-735 / DSM 15497 / L2-TR).